The sequence spans 172 residues: Small integral membrane protein 23 (172 aa).

Residues methionine 1–threonine 36 lie on the Cytoplasmic side of the membrane. The helical; Signal-anchor for type II membrane protein transmembrane segment at leucine 37–glycine 53 threads the bilayer. Topologically, residues serine 54–leucine 172 are extracellular. A coiled-coil region spans residues leucine 96 to leucine 128.

Its subcellular location is the cell membrane. The polypeptide is Small integral membrane protein 23 (SMIM23) (Homo sapiens (Human)).